The primary structure comprises 428 residues: Aerobic C4-dicarboxylate transport protein (428 aa).

9 helical membrane-spanning segments follow: residues 5-27, 47-64, 77-99, 141-163, 184-206, 216-238, 289-311, 326-348, and 353-375; these read LFKS…GHYY, MIIA…IAGM, ALLY…VNVV, VIGA…FGFA, VIFG…AMAF, LVQL…VVVL, VVGL…YLTM, IFHQ…GVTG, and VLAA…ILGI.

It belongs to the dicarboxylate/amino acid:cation symporter (DAACS) (TC 2.A.23) family.

The protein localises to the cell inner membrane. Responsible for the transport of dicarboxylates such as succinate, fumarate, and malate from the periplasm across the membrane. The sequence is that of Aerobic C4-dicarboxylate transport protein from Salmonella typhi.